The primary structure comprises 100 residues: Cytochrome b (100 aa).

Transmembrane regions (helical) follow at residues 1–21, 45–66, and 81–100; these read MGSL…FLAM, WLIR…YLHI, and WNIG…VGYV. Heme b is bound by residues His51 and His65.

The protein belongs to the cytochrome b family. As to quaternary structure, the cytochrome bc1 complex contains 3 respiratory subunits (MT-CYB, CYC1 and UQCRFS1), 2 core proteins (UQCRC1 and UQCRC2) and probably 6 low-molecular weight proteins. The cofactor is heme b.

The protein localises to the mitochondrion inner membrane. In terms of biological role, component of the ubiquinol-cytochrome c reductase complex (complex III or cytochrome b-c1 complex) that is part of the mitochondrial respiratory chain. The b-c1 complex mediates electron transfer from ubiquinol to cytochrome c. Contributes to the generation of a proton gradient across the mitochondrial membrane that is then used for ATP synthesis. The protein is Cytochrome b (mt-cyb) of Polypterus sp. (Bichir).